The primary structure comprises 560 residues: DNA ligase B (560 aa).

The active-site N6-AMP-lysine intermediate is lysine 124.

It belongs to the NAD-dependent DNA ligase family. LigB subfamily.

The catalysed reaction is NAD(+) + (deoxyribonucleotide)n-3'-hydroxyl + 5'-phospho-(deoxyribonucleotide)m = (deoxyribonucleotide)n+m + AMP + beta-nicotinamide D-nucleotide.. Functionally, catalyzes the formation of phosphodiester linkages between 5'-phosphoryl and 3'-hydroxyl groups in double-stranded DNA using NAD as a coenzyme and as the energy source for the reaction. The chain is DNA ligase B from Escherichia coli O6:H1 (strain CFT073 / ATCC 700928 / UPEC).